The chain runs to 208 residues: TM2 domain-containing protein 1 (208 aa).

The first 37 residues, 1–37 (MAAAWPAGRASPAAGPPGLLRTLWLVTVAAGHCGAAA), serve as a signal peptide directing secretion. Topologically, residues 38-129 (SGAVGGEETP…YSYKVAVALS (92 aa)) are extracellular. N-linked (GlcNAc...) asparagine glycans are attached at residues Asn73, Asn76, and Asn97. The TM2 domain maps to 119 to 167 (GYSYKVAVALSLFLGWLGADRFYLGYPALGLLKFCTVGFCGIGSLIDFI). A helical transmembrane segment spans residues 130–150 (LFLGWLGADRFYLGYPALGLL). The Cytoplasmic segment spans residues 151 to 154 (KFCT). The helical transmembrane segment at 155–175 (VGFCGIGSLIDFILISMQIVG) threads the bilayer. Residues 176–208 (PSDGSSYIIDYYGTRLTRLSITNETFRKTQLYP) are Extracellular-facing. The N-linked (GlcNAc...) asparagine glycan is linked to Asn198.

Belongs to the TM2 family. In terms of assembly, interacts with APP beta-APP42 (amyloid-beta protein 42). In terms of processing, N-glycosylated.

The protein localises to the membrane. Its function is as follows. May participate in amyloid-beta-induced apoptosis via its interaction with beta-APP42. The chain is TM2 domain-containing protein 1 (Tm2d1) from Mus musculus (Mouse).